Reading from the N-terminus, the 853-residue chain is Envelope glycoprotein gp160 (853 aa).

The signal sequence occupies residues 1–31 (MRARGIERNCQNWWKWGIMLLGILMTCSAAD). Over 32-681 (NLWVTVYYGV…ITQWLWYIKI (650 aa)) the chain is Extracellular. C53 and C73 are joined by a disulfide. N-linked (GlcNAc...) asparagine; by host glycans are attached at residues N87, N129, N137, N143, N153, N157, N183, N188, N198, N235, N242, N263, N277, and N290. 5 disulfides stabilise this stretch: C118-C206, C125-C197, C130-C154, C219-C248, and C229-C240. A V1 region spans residues 130-153 (CSDELRNNGTMGNNVTTEEKGMKN). Positions 154–197 (CSFNVTTVLKDKKQQVYALFYRLDIVPIDNDSSTNSTNYRLINC) are V2. Residues 297–329 (CARPYQNTRQRTPIGLGQSLYTTRSRSIIGQAH) form a V3 region. C297 and C330 are joined by a disulfide. N-linked (GlcNAc...) asparagine; by host glycans are attached at residues N331 and N353. A CD4-binding loop region spans residues 362–372 (SSGGDPEITTH). Intrachain disulfides connect C376–C442 and C383–C416. Positions 383–416 (CNTSGLFNSTWNISAWNNITESNNSTNTNITLQC) are V4. N-linked (GlcNAc...) asparagine; by host glycosylation is found at N384, N390, N394, N400, N405, N406, N411, N445, N458, N459, and N462. V5 stretches follow at residues 457 to 468 (INNSTNETFRPG) and 460 to 468 (STNETFRPG). The fusion peptide stretch occupies residues 509–529 (AIGLGAMFLGFLGAAGSTMGA). Positions 571–589 (KQLQARILAVERYLKDQQL) are immunosuppression. C595 and C601 are disulfide-bonded. N608, N613, N622, and N634 each carry an N-linked (GlcNAc...) asparagine; by host glycan. Residues 630-664 (REIDNYTGLIYSLIEESQTQQEKNEKELLELDKWA) are a coiled coil. The tract at residues 659–680 (ELDKWASLWNWFSITQWLWYIK) is MPER; binding to GalCer. Residues 682 to 702 (FIMIIGGLIGLRIVFAVLSLV) form a helical membrane-spanning segment. The Cytoplasmic portion of the chain corresponds to 703–853 (NRVRQGYSPL…IRQGLERSLL (151 aa)). A YXXL motif; contains endocytosis signal motif is present at residues 709-712 (YSPL). The disordered stretch occupies residues 716 to 738 (TLLPAPRGPDRPEGTEEEGGERG). Residues 723 to 738 (GPDRPEGTEEEGGERG) are compositionally biased toward basic and acidic residues. Residues C761 and C834 are each lipidated (S-palmitoyl cysteine; by host). A Di-leucine internalization motif motif is present at residues 852–853 (LL).

The protein belongs to the HIV-1 env protein family. As to quaternary structure, the mature envelope protein (Env) consists of a homotrimer of non-covalently associated gp120-gp41 heterodimers. The resulting complex protrudes from the virus surface as a spike. There seems to be as few as 10 spikes on the average virion. Interacts with host CD4, CCR5 and CXCR4. Gp120 also interacts with the C-type lectins CD209/DC-SIGN and CLEC4M/DC-SIGNR (collectively referred to as DC-SIGN(R)). Gp120 and gp41 interact with GalCer. Gp120 interacts with host ITGA4/ITGB7 complex; on CD4+ T-cells, this interaction results in rapid activation of integrin ITGAL/LFA-1, which facilitates efficient cell-to-cell spreading of HIV-1. Gp120 interacts with cell-associated heparan sulfate; this interaction increases virus infectivity on permissive cells and may be involved in infection of CD4- cells. The mature envelope protein (Env) consists of a homotrimer of non-covalently associated gp120-gp41 heterodimers. The resulting complex protrudes from the virus surface as a spike. There seems to be as few as 10 spikes on the average virion. Highly glycosylated by host. The high number of glycan on the protein is reffered to as 'glycan shield' because it contributes to hide protein sequence from adaptive immune system. Post-translationally, palmitoylation of the transmembrane protein and of Env polyprotein (prior to its proteolytic cleavage) is essential for their association with host cell membrane lipid rafts. Palmitoylation is therefore required for envelope trafficking to classical lipid rafts, but not for viral replication. In terms of processing, specific enzymatic cleavages in vivo yield mature proteins. Envelope glycoproteins are synthesized as an inactive precursor that is heavily N-glycosylated and processed likely by host cell furin in the Golgi to yield the mature SU and TM proteins. The cleavage site between SU and TM requires the minimal sequence [KR]-X-[KR]-R. About 2 of the 9 disulfide bonds of gp41 are reduced by P4HB/PDI, following binding to CD4 receptor.

It localises to the virion membrane. Its subcellular location is the host cell membrane. It is found in the host endosome membrane. Functionally, oligomerizes in the host endoplasmic reticulum into predominantly trimers. In a second time, gp160 transits in the host Golgi, where glycosylation is completed. The precursor is then proteolytically cleaved in the trans-Golgi and thereby activated by cellular furin or furin-like proteases to produce gp120 and gp41. Its function is as follows. Attaches the virus to the host lymphoid cell by binding to the primary receptor CD4. This interaction induces a structural rearrangement creating a high affinity binding site for a chemokine coreceptor like CXCR4 and/or CCR5. Acts as a ligand for CD209/DC-SIGN and CLEC4M/DC-SIGNR, which are respectively found on dendritic cells (DCs), and on endothelial cells of liver sinusoids and lymph node sinuses. These interactions allow capture of viral particles at mucosal surfaces by these cells and subsequent transmission to permissive cells. HIV subverts the migration properties of dendritic cells to gain access to CD4+ T-cells in lymph nodes. Virus transmission to permissive T-cells occurs either in trans (without DCs infection, through viral capture and transmission), or in cis (following DCs productive infection, through the usual CD4-gp120 interaction), thereby inducing a robust infection. In trans infection, bound virions remain infectious over days and it is proposed that they are not degraded, but protected in non-lysosomal acidic organelles within the DCs close to the cell membrane thus contributing to the viral infectious potential during DCs' migration from the periphery to the lymphoid tissues. On arrival at lymphoid tissues, intact virions recycle back to DCs' cell surface allowing virus transmission to CD4+ T-cells. Acts as a class I viral fusion protein. Under the current model, the protein has at least 3 conformational states: pre-fusion native state, pre-hairpin intermediate state, and post-fusion hairpin state. During fusion of viral and target intracellular membranes, the coiled coil regions (heptad repeats) assume a trimer-of-hairpins structure, positioning the fusion peptide in close proximity to the C-terminal region of the ectodomain. The formation of this structure appears to drive apposition and subsequent fusion of viral and target cell membranes. Complete fusion occurs in host cell endosomes and is dynamin-dependent, however some lipid transfer might occur at the plasma membrane. The virus undergoes clathrin-dependent internalization long before endosomal fusion, thus minimizing the surface exposure of conserved viral epitopes during fusion and reducing the efficacy of inhibitors targeting these epitopes. Membranes fusion leads to delivery of the nucleocapsid into the cytoplasm. The sequence is that of Envelope glycoprotein gp160 from Human immunodeficiency virus type 1 group M subtype D (isolate ELI) (HIV-1).